Consider the following 153-residue polypeptide: Transcriptional repressor NrdR (153 aa).

Residues 3–33 fold into a zinc finger; that stretch reads CPYCNYKESKVIDSRHTDLKSIRRRRECESC. Residues 48–138 form the ATP-cone domain; that stretch reads LMVIKKDNSR…VYRQFKDINT (91 aa).

This sequence belongs to the NrdR family. Zn(2+) is required as a cofactor.

Functionally, negatively regulates transcription of bacterial ribonucleotide reductase nrd genes and operons by binding to NrdR-boxes. This Clostridioides difficile (strain 630) (Peptoclostridium difficile) protein is Transcriptional repressor NrdR.